The chain runs to 367 residues: CCCH-type zinc finger protein moe-3 (367 aa).

The segment covering 1–15 has biased composition (basic and acidic residues); the sequence is MSKVKGDLEKSDKRP. Positions 1 to 57 are disordered; it reads MSKVKGDLEKSDKRPPSSMSTGSADSGVFSSGVHASSPSHSQGSSSQSGPPSPTTQL. Residues 30–49 show a composition bias toward low complexity; it reads SSGVHASSPSHSQGSSSQSG. Residues 63-92 are a coiled coil; sequence ETANLIAVNEQLRKEIAENKQIQTNQMRAL. The tract at residues 107–126 is disordered; that stretch reads SISPHHGFPQRPPRGERRMQ. 2 consecutive C3H1-type zinc fingers follow at residues 130–158 and 172–200; these read SYKT…HGEE and KYKT…HPDN. The interval 235 to 268 is disordered; sequence NTRNSYNQQPPPMGGLEMQSSPMKSSSDSSHMRS. Over residues 252–268 the composition is skewed to low complexity; the sequence is MQSSPMKSSSDSSHMRS.

In terms of tissue distribution, exclusively expressed in the hermaphrodite gonad. Weakly distributed throughout gonadal oocytes from the mitotic stage to the developing diakinesis stage, with expression restricted to the distal region of the gonad.

In terms of biological role, zinc-finger protein that may play a role in oocyte maturation and fertility. The protein is CCCH-type zinc finger protein moe-3 of Caenorhabditis elegans.